A 188-amino-acid chain; its full sequence is Elongation factor P (188 aa).

Residue Lys34 is modified to N6-(3,6-diaminohexanoyl)-5-hydroxylysine.

This sequence belongs to the elongation factor P family. May be beta-lysylated on the epsilon-amino group of Lys-34 by the combined action of EpmA and EpmB, and then hydroxylated on the C5 position of the same residue by EpmC (if this protein is present). Lysylation is critical for the stimulatory effect of EF-P on peptide-bond formation. The lysylation moiety may extend toward the peptidyltransferase center and stabilize the terminal 3-CCA end of the tRNA. Hydroxylation of the C5 position on Lys-34 may allow additional potential stabilizing hydrogen-bond interactions with the P-tRNA.

The protein localises to the cytoplasm. It functions in the pathway protein biosynthesis; polypeptide chain elongation. Functionally, involved in peptide bond synthesis. Alleviates ribosome stalling that occurs when 3 or more consecutive Pro residues or the sequence PPG is present in a protein, possibly by augmenting the peptidyl transferase activity of the ribosome. Modification of Lys-34 is required for alleviation. This Glaesserella parasuis serovar 5 (strain SH0165) (Haemophilus parasuis) protein is Elongation factor P.